Reading from the N-terminus, the 201-residue chain is Holliday junction branch migration complex subunit RuvA (201 aa).

Positions 1-64 (MFAFLRGELV…EDAQQLFGFL (64 aa)) are domain I. The tract at residues 65–143 (DEEELQLFRL…KIQPAASGKT (79 aa)) is domain II. The interval 144–154 (AGAPQALQLNE) is flexible linker. The tract at residues 154–201 (EDALAALMTLGFPKPAAQKAISGILETSPGLSVEEVVRAALIAIHNNF) is domain III.

Belongs to the RuvA family. Homotetramer. Forms an RuvA(8)-RuvB(12)-Holliday junction (HJ) complex. HJ DNA is sandwiched between 2 RuvA tetramers; dsDNA enters through RuvA and exits via RuvB. An RuvB hexamer assembles on each DNA strand where it exits the tetramer. Each RuvB hexamer is contacted by two RuvA subunits (via domain III) on 2 adjacent RuvB subunits; this complex drives branch migration. In the full resolvosome a probable DNA-RuvA(4)-RuvB(12)-RuvC(2) complex forms which resolves the HJ.

Its subcellular location is the cytoplasm. Functionally, the RuvA-RuvB-RuvC complex processes Holliday junction (HJ) DNA during genetic recombination and DNA repair, while the RuvA-RuvB complex plays an important role in the rescue of blocked DNA replication forks via replication fork reversal (RFR). RuvA specifically binds to HJ cruciform DNA, conferring on it an open structure. The RuvB hexamer acts as an ATP-dependent pump, pulling dsDNA into and through the RuvAB complex. HJ branch migration allows RuvC to scan DNA until it finds its consensus sequence, where it cleaves and resolves the cruciform DNA. In Chlorobaculum tepidum (strain ATCC 49652 / DSM 12025 / NBRC 103806 / TLS) (Chlorobium tepidum), this protein is Holliday junction branch migration complex subunit RuvA.